The primary structure comprises 441 residues: UDP-N-acetylmuramoylalanine--D-glutamate ligase (441 aa).

Residue Gly112 to Thr118 coordinates ATP.

Belongs to the MurCDEF family.

It localises to the cytoplasm. It carries out the reaction UDP-N-acetyl-alpha-D-muramoyl-L-alanine + D-glutamate + ATP = UDP-N-acetyl-alpha-D-muramoyl-L-alanyl-D-glutamate + ADP + phosphate + H(+). It functions in the pathway cell wall biogenesis; peptidoglycan biosynthesis. Cell wall formation. Catalyzes the addition of glutamate to the nucleotide precursor UDP-N-acetylmuramoyl-L-alanine (UMA). This chain is UDP-N-acetylmuramoylalanine--D-glutamate ligase, found in Gloeobacter violaceus (strain ATCC 29082 / PCC 7421).